The chain runs to 401 residues: Aspartokinase (401 aa).

It belongs to the aspartokinase family.

It carries out the reaction L-aspartate + ATP = 4-phospho-L-aspartate + ADP. The protein operates within amino-acid biosynthesis; L-lysine biosynthesis via DAP pathway; (S)-tetrahydrodipicolinate from L-aspartate: step 1/4. It functions in the pathway amino-acid biosynthesis; L-methionine biosynthesis via de novo pathway; L-homoserine from L-aspartate: step 1/3. Its pathway is amino-acid biosynthesis; L-threonine biosynthesis; L-threonine from L-aspartate: step 1/5. This chain is Aspartokinase (lysC), found in Rickettsia conorii (strain ATCC VR-613 / Malish 7).